The following is a 196-amino-acid chain: Late protein I196L (196 aa).

2 tandem repeats follow at residues 28–48 (SNYL…TSSN) and 49–68 (HITT…SSNH). Residues 69 to 87 (ITTAISNNITDKDDYTHFS) form a 3; approximate repeat.

It belongs to the asfivirus I196L family.

This Ornithodoros (relapsing fever ticks) protein is Late protein I196L.